A 357-amino-acid chain; its full sequence is tRNA N6-adenosine threonylcarbamoyltransferase (357 aa).

Positions 120 and 124 each coordinate Fe cation. Residues 143–147, Asp-176, Gly-189, and Asn-289 each bind substrate; that span reads LVSGG. Asp-317 provides a ligand contact to Fe cation.

This sequence belongs to the KAE1 / TsaD family. Fe(2+) is required as a cofactor.

The protein resides in the cytoplasm. It catalyses the reaction L-threonylcarbamoyladenylate + adenosine(37) in tRNA = N(6)-L-threonylcarbamoyladenosine(37) in tRNA + AMP + H(+). In terms of biological role, required for the formation of a threonylcarbamoyl group on adenosine at position 37 (t(6)A37) in tRNAs that read codons beginning with adenine. Is involved in the transfer of the threonylcarbamoyl moiety of threonylcarbamoyl-AMP (TC-AMP) to the N6 group of A37, together with TsaE and TsaB. TsaD likely plays a direct catalytic role in this reaction. This Polynucleobacter asymbioticus (strain DSM 18221 / CIP 109841 / QLW-P1DMWA-1) (Polynucleobacter necessarius subsp. asymbioticus) protein is tRNA N6-adenosine threonylcarbamoyltransferase.